Here is a 569-residue protein sequence, read N- to C-terminus: Proline--tRNA ligase (569 aa).

Belongs to the class-II aminoacyl-tRNA synthetase family. ProS type 1 subfamily. In terms of assembly, homodimer.

The protein resides in the cytoplasm. The catalysed reaction is tRNA(Pro) + L-proline + ATP = L-prolyl-tRNA(Pro) + AMP + diphosphate. Functionally, catalyzes the attachment of proline to tRNA(Pro) in a two-step reaction: proline is first activated by ATP to form Pro-AMP and then transferred to the acceptor end of tRNA(Pro). As ProRS can inadvertently accommodate and process non-cognate amino acids such as alanine and cysteine, to avoid such errors it has two additional distinct editing activities against alanine. One activity is designated as 'pretransfer' editing and involves the tRNA(Pro)-independent hydrolysis of activated Ala-AMP. The other activity is designated 'posttransfer' editing and involves deacylation of mischarged Ala-tRNA(Pro). The misacylated Cys-tRNA(Pro) is not edited by ProRS. This is Proline--tRNA ligase from Legionella pneumophila (strain Paris).